Reading from the N-terminus, the 603-residue chain is Ankyrin repeat and LEM domain-containing protein 2 homolog (603 aa).

A helical; Signal-anchor for type III membrane protein membrane pass occupies residues 2–22; that stretch reads GRKSAILAVILAIIYFRSNFS. ANK repeat units lie at residues 161–190 and 221–250; these read FRYN…NIDF and NSDT…TDRT. 2 disordered regions span residues 446–465 and 505–538; these read ISEN…DDDD and LPPP…PPPT. Positions 456–465 are enriched in acidic residues; the sequence is DSADDEDDDD.

Belongs to the ANKLE2 family. In terms of assembly, interacts with baf-1. Interacts with protein phosphatase 2A (PP2A) components.

It localises to the nucleus membrane. Functionally, involved in mitotic nuclear envelope reassembly by promoting dephosphorylation of baf-1 during mitotic exit. Coordinates the control of baf-1 dephosphorylation by inhibiting VRK1 kinase and promoting dephosphorylation of baf-1 by protein phosphatase 2A (PP2A), thereby facilitating nuclear envelope assembly. It is unclear whether it acts as a real PP2A regulatory subunit or whether it is involved in recruitment of the PP2A complex. The protein is Ankyrin repeat and LEM domain-containing protein 2 homolog (lem-4) of Caenorhabditis elegans.